A 264-amino-acid polypeptide reads, in one-letter code: MAKISKIEAQKRKGRYNIYLDGKYAFPVAESVLIQFRLMKGTELDEKQIAAIATADQQAKAYSRMLDYLSYQMRTESDIVKKLKEIDTPEEFVESILKKLRGQQLIDDHAYAASYVRTMINTDLKGPGVIRQHLRQKGIGENDIDDALTQFTPEVQAELAKKLAEKLFRRYRNQPERRREQKVQQGLMTKGFSSSVYEMIKDEVVPQPDLEQENDLLAKEAAKQWRRVRCYQGYEREQHFKQAMYRKGFDLDDVQSWLDAQDFQ.

It belongs to the RecX family.

Its subcellular location is the cytoplasm. Its function is as follows. Modulates RecA activity. This chain is Regulatory protein RecX, found in Limosilactobacillus reuteri (strain DSM 20016) (Lactobacillus reuteri).